The primary structure comprises 454 residues: MSTTDTIVAQATPPGRGGVGILRVSGRAASEVAHAVLGKLPKPRYADYLPFKDVDGSTLDQGIALYFPGPNSFTGEDVLELQGHGGPVILDLLLKRILALPGLRIARPGEFSERAFLNDKLDLAQAEAIADLIDASSEQAARSAVNSLQGAFSARIHQLVEALTHLRIYVEAAIDFPDEEIDFLSDGKIEGQLNGVMADLEQVRTEARQGSLLREGMKVVIAGRPNAGKSSLLNALAGREAAIVTDIAGTTRDVLREHIHIDGMPLHIIDTAGLREANDEVERIGIERAWNEIEQADRVLFMVDGTTTDATEPAAIWPEFMARLPATLPITVVRNKADITGETLGLTKVNGHSLIRLSARTGEGIDLLRDHLKQSMGFTSNTEGGFLARRPHLQALETAARHLIQGHEQLVSAYAGELLAEELRLAQQSLSEITGEFSSDDLLGRIFSSFCIGK.

3 residues coordinate (6S)-5-formyl-5,6,7,8-tetrahydrofolate: Arg23, Glu80, and Lys120. One can recognise a TrmE-type G domain in the interval 216–377 (GMKVVIAGRP…LRDHLKQSMG (162 aa)). Residue Asn226 participates in K(+) binding. Residues 226 to 231 (NAGKSS), 245 to 251 (TDIAGTT), 270 to 273 (DTAG), 335 to 338 (NKAD), and 358 to 360 (SAR) each bind GTP. Ser230 provides a ligand contact to Mg(2+). K(+) contacts are provided by Thr245, Ile247, and Thr250. Thr251 serves as a coordination point for Mg(2+). Lys454 is a (6S)-5-formyl-5,6,7,8-tetrahydrofolate binding site.

The protein belongs to the TRAFAC class TrmE-Era-EngA-EngB-Septin-like GTPase superfamily. TrmE GTPase family. As to quaternary structure, homodimer. Heterotetramer of two MnmE and two MnmG subunits. It depends on K(+) as a cofactor.

Its subcellular location is the cytoplasm. Its function is as follows. Exhibits a very high intrinsic GTPase hydrolysis rate. Involved in the addition of a carboxymethylaminomethyl (cmnm) group at the wobble position (U34) of certain tRNAs, forming tRNA-cmnm(5)s(2)U34. This Yersinia pestis protein is tRNA modification GTPase MnmE.